A 675-amino-acid polypeptide reads, in one-letter code: MTTSHMNGHVTEESDNEVKNVDLASPEEHQKHREMAVDCPGDLGTRMMPVRRSAQLERIRQQQEDMRRRREEEGKKQELDLNSSMRLKKLAQIPPKTGIDNPIFDTEEGIVLESPHYAVKILEVEDLFSSLKHIQHTLVDSQSQEDISLLLQLVQNKDFQNAFKIHNAVTVHMNKASPPFPLISNAQDLAQEVQTVLKPVHHKEGQELTALLSAPHVQALLLAHDKVAEQEMQLEPFTDERVYESIGQYGGETVKIVRIEKARDIPLGATVRNEMDSVIISRIVKGGAAEKSGLLHEGDEVLEINGIEIRGKDVNEVFDLLSDMHGTLTFVLIPSQQIKPPPAKETVIHVKAHFDYDPSDDPYVPCRELGLSFQKGDILHIISQEDPNWWQAYREGDEDNQPLAGLVPGKSFQQQREAMKQTIEEDKEPEKSGKLWCAKKNKKKRKKVLYNANKNDDYDNEEILTYEEMSLYHQPANRKRPIILIGPQNCGQNELRQRLMNKEKDRFASAVPHTTRSRRDHEVAGRDYHFVSRQAFEADIAAGKFIEHGEFEKNLYGTSIDSVRQVINSGKICLLSLRTQSLKTLRNSDLKPYIIFIAPPSQERLRALLAKEGKNPKPEELREIIEKTREMEQNNGHYFDTAIVNSDLDKAYQELLRLINKLDTEPQWVPSSWLR.

Residues 1–78 (MTTSHMNGHV…RREEEGKKQE (78 aa)) are disordered. Residues 1–345 (MTTSHMNGHV…QQIKPPPAKE (345 aa)) are required for the correct localization of PALS1 and PATJ at cell-cell contacts and the normal formation of tight junctions and adherens junctions. Basic and acidic residues-rich tracts occupy residues 10-36 (VTEE…REMA) and 54-78 (AQLE…KKQE). Serine 14 and serine 25 each carry phosphoserine. The interaction with PARD6B stretch occupies residues 21–140 (VDLASPEEHQ…LKHIQHTLVD (120 aa)). Phosphoserine occurs at positions 83 and 84. L27 domains follow at residues 120–177 (KILE…NKAS) and 179–235 (PFPL…MQLE). The segment at 181–243 (PLISNAQDLA…LEPFTDERVY (63 aa)) is interaction with LIN7C. The PDZ domain maps to 256–336 (IVRIEKARDI…TLTFVLIPSQ (81 aa)). Residues 345 to 417 (ETVIHVKAHF…PGKSFQQQRE (73 aa)) form the SH3 domain. Residues 479–660 (KRPIILIGPQ…AYQELLRLIN (182 aa)) enclose the Guanylate kinase-like domain. 486–493 (GPQNCGQN) lines the ATP pocket.

The protein belongs to the MAGUK family. In terms of assembly, heterodimer with MPP1. Forms a heterotrimeric complex composed of PALS1, LIN7B and PATJ; the N-terminal L27 domain of PALS1 interacts with the L27 domain of PATJ and the C-terminal L27 domain of PALS1 interacts with the L27 domain of LIN7B. Component of a complex composed of PALS1, CRB1 and MPP4. Component of a complex whose core is composed of ARHGAP17, AMOT, PALS1, PATJ and PARD3/PAR3. Component of a complex composed of PALS1, CRB1 and EPB41L5. Within the complex, interacts (via HOOK domain) with EPB41L5 (via FERM domain), and interacts with CRB1 (via intracellular domain). Component of a complex composed of PALS1, MPP3 and CRB1; PALS1 acts as a bridging protein between MPP3 (via guanylate kinase-like domain) and CRB1. Component of a complex composed of CRB3, PALS1 and PATJ. As part of the Crumbs complex; interacts with WWP1, the interaction is enhanced by AMOTL2 and facilitates WWP1 localization to the plasma membrane. The Crumbs complex promotes monoubiquitination of AMOTL2 by WWP1, which activates the Hippo signaling pathway. Interacts (via PDZ domain) with PATJ (via N-terminus). Interacts with EZR. Interacts (via PDZ domain) with CRB1 (via C-terminal ERLI motif). While the PDZ domain is sufficient for interaction with CRB1, the adjacent SH3 and guanylate kinase-like domains are likely to contribute to a high affinity interaction. Interacts with WWTR1/TAZ (via WW domain). Interacts with MPP7. Interacts (via PDZ domain) with CRB3 (via C-terminus). Interacts with LIN7C. Interacts with MPDZ. Interacts with PARD6B. Interacts with SC6A1. Interacts with CDH5; the interaction promotes PALS1 localization to cell junctions and is required for CDH5-mediated vascular lumen formation and endothelial cell. Interacts with NPHP1 (via coiled coil and SH3 domains). Interacts with NPHP4. Interacts with CRB2.

It is found in the golgi apparatus. The protein localises to the cell membrane. Its subcellular location is the endomembrane system. The protein resides in the cell junction. It localises to the tight junction. It is found in the adherens junction. The protein localises to the cell projection. Its subcellular location is the axon. The protein resides in the perikaryon. It localises to the apical cell membrane. In terms of biological role, plays a role in tight junction biogenesis and in the establishment of cell polarity in epithelial cells. Also involved in adherens junction biogenesis by ensuring correct localization of the exocyst complex protein EXOC4/SEC8 which allows trafficking of adherens junction structural component CDH1 to the cell surface. Plays a role through its interaction with CDH5 in vascular lumen formation and endothelial membrane polarity. Required during embryonic and postnatal retinal development. Required for the maintenance of cerebellar progenitor cells in an undifferentiated proliferative state, preventing premature differentiation, and is required for cerebellar histogenesis, fissure formation, cerebellar layer organization and cortical development. Plays a role in neuronal progenitor cell survival, potentially via promotion of mTOR signaling. Plays a role in the radial and longitudinal extension of the myelin sheath in Schwann cells. May modulate SC6A1/GAT1-mediated GABA uptake by stabilizing the transporter. May play a role in the T-cell receptor-mediated activation of NF-kappa-B. Required for localization of EZR to the apical membrane of parietal cells and may play a role in the dynamic remodeling of the apical cytoskeleton. Required for the normal polarized localization of the vesicular marker STX4. Required for the correct trafficking of the myelin proteins PMP22 and MAG. Involved in promoting phosphorylation and cytoplasmic retention of transcriptional coactivators YAP1 and WWTR1/TAZ which leads to suppression of TGFB1-dependent transcription of target genes such as CCN2/CTGF, SERPINE1/PAI1, SNAI1/SNAIL1 and SMAD7. The polypeptide is Protein PALS1 (Canis lupus familiaris (Dog)).